Reading from the N-terminus, the 134-residue chain is DNA-binding protein inhibitor ID-2 (134 aa).

2 positions are modified to phosphoserine: S14 and S25. One can recognise a bHLH domain in the interval 23–75; it reads SRSKTPVDDPMSLLYNMNDCYSKLKELVPSIPQNKKVTKMEILQHVIDYILDL. The interval 30–83 is interaction with IFI204; it reads DDPMSLLYNMNDCYSKLKELVPSIPQNKKVTKMEILQHVIDYILDLQIALDSHP. Positions 106–115 match the Nuclear export signal motif; the sequence is LNTDISILSL.

As to quaternary structure, interacts with GATA4 and NKX2-5. Interacts with NR0B2. Interacts with CLOCK and BMAL1. Interacts with IFI204. Interacts with NEDD9/HEF1. Interacts with ASB4; this interaction promotes ID2 proteasomal degradation. Polyubiquitinated; which is favored by Ifi204 and leads to proteasomal degradation. Ubiquitinated in a ASB4-depedent manner, leading to proteasomal degradation. Post-translationally, phosphorylated in vitro by CDK1, PKA and PKC.

It is found in the cytoplasm. Its subcellular location is the nucleus. Functionally, transcriptional regulator (lacking a basic DNA binding domain) which negatively regulates the basic helix-loop-helix (bHLH) transcription factors by forming heterodimers and inhibiting their DNA binding and transcriptional activity. Implicated in regulating a variety of cellular processes, including cellular growth, senescence, differentiation, apoptosis, angiogenesis, and neoplastic transformation. Inhibits skeletal muscle and cardiac myocyte differentiation. Regulates the circadian clock by repressing the transcriptional activator activity of the CLOCK-BMAL1 heterodimer. Restricts the CLOCK and BMAL1 localization to the cytoplasm. Plays a role in both the input and output pathways of the circadian clock: in the input component, is involved in modulating the magnitude of photic entrainment and in the output component, contributes to the regulation of a variety of liver clock-controlled genes involved in lipid metabolism. This is DNA-binding protein inhibitor ID-2 (Id2) from Mus musculus (Mouse).